We begin with the raw amino-acid sequence, 236 residues long: Biosynthetic peptidoglycan transglycosylase (236 aa).

The chain crosses the membrane as a helical span at residues alanine 12–proline 31.

It belongs to the glycosyltransferase 51 family.

The protein resides in the cell inner membrane. It carries out the reaction [GlcNAc-(1-&gt;4)-Mur2Ac(oyl-L-Ala-gamma-D-Glu-L-Lys-D-Ala-D-Ala)](n)-di-trans,octa-cis-undecaprenyl diphosphate + beta-D-GlcNAc-(1-&gt;4)-Mur2Ac(oyl-L-Ala-gamma-D-Glu-L-Lys-D-Ala-D-Ala)-di-trans,octa-cis-undecaprenyl diphosphate = [GlcNAc-(1-&gt;4)-Mur2Ac(oyl-L-Ala-gamma-D-Glu-L-Lys-D-Ala-D-Ala)](n+1)-di-trans,octa-cis-undecaprenyl diphosphate + di-trans,octa-cis-undecaprenyl diphosphate + H(+). Its pathway is cell wall biogenesis; peptidoglycan biosynthesis. Peptidoglycan polymerase that catalyzes glycan chain elongation from lipid-linked precursors. The polypeptide is Biosynthetic peptidoglycan transglycosylase (Pseudomonas putida (strain GB-1)).